We begin with the raw amino-acid sequence, 603 residues long: Membrane protein insertase YidC (603 aa).

A helical transmembrane segment spans residues 7–27 (FFITIALSVLILAVWQYFYVL). Over residues 38 to 51 (RVEQQRVEEQKKAA) the composition is skewed to basic and acidic residues. The segment at 38–76 (RVEQQRVEEQKKAAEAANPGAGTPAPAPGTIPNAPGGDT) is disordered. The span at 52 to 74 (EAANPGAGTPAPAPGTIPNAPGG) shows a compositional bias: low complexity. The next 5 membrane-spanning stretches (helical) occupy residues 352-372 (FDLL…FWLI), 378-398 (FLGN…ALFF), 452-472 (WPVA…YITI), 497-517 (LFGL…WPLI), and 540-560 (IFTW…AGLV).

This sequence belongs to the OXA1/ALB3/YidC family. Type 1 subfamily. Interacts with the Sec translocase complex via SecD. Specifically interacts with transmembrane segments of nascent integral membrane proteins during membrane integration.

It is found in the cell inner membrane. Functionally, required for the insertion and/or proper folding and/or complex formation of integral membrane proteins into the membrane. Involved in integration of membrane proteins that insert both dependently and independently of the Sec translocase complex, as well as at least some lipoproteins. Aids folding of multispanning membrane proteins. In Mesorhizobium japonicum (strain LMG 29417 / CECT 9101 / MAFF 303099) (Mesorhizobium loti (strain MAFF 303099)), this protein is Membrane protein insertase YidC.